The chain runs to 96 residues: Small ribosomal subunit protein bS6 (96 aa).

It belongs to the bacterial ribosomal protein bS6 family.

Functionally, binds together with bS18 to 16S ribosomal RNA. The chain is Small ribosomal subunit protein bS6 from Natranaerobius thermophilus (strain ATCC BAA-1301 / DSM 18059 / JW/NM-WN-LF).